Consider the following 156-residue polypeptide: Ribosomal RNA large subunit methyltransferase H (156 aa).

Residues leucine 72, glycine 104, and 123-128 (LGPMTF) each bind S-adenosyl-L-methionine.

This sequence belongs to the RNA methyltransferase RlmH family. In terms of assembly, homodimer.

Its subcellular location is the cytoplasm. It catalyses the reaction pseudouridine(1915) in 23S rRNA + S-adenosyl-L-methionine = N(3)-methylpseudouridine(1915) in 23S rRNA + S-adenosyl-L-homocysteine + H(+). In terms of biological role, specifically methylates the pseudouridine at position 1915 (m3Psi1915) in 23S rRNA. This is Ribosomal RNA large subunit methyltransferase H from Nitratidesulfovibrio vulgaris (strain ATCC 29579 / DSM 644 / CCUG 34227 / NCIMB 8303 / VKM B-1760 / Hildenborough) (Desulfovibrio vulgaris).